The primary structure comprises 700 residues: Tectonic-2 (700 aa).

The N-terminal stretch at 1-25 (MGSLSPLSLLWGLLLLQGVLRPLRG) is a signal peptide. Residues 26–665 (DPVFIPPFIR…YYQGEPQSQC (640 aa)) lie on the Extracellular side of the membrane. 5 N-linked (GlcNAc...) asparagine glycosylation sites follow: Asn-76, Asn-82, Asn-146, Asn-156, and Asn-389. Residues 666 to 682 (VAKGLMLLSLLMLAILL) traverse the membrane as a helical segment. The Cytoplasmic segment spans residues 683–700 (RHPWVRMCKARDSAAIYH).

It belongs to the tectonic family. In terms of assembly, part of the tectonic-like complex (also named B9 complex). Significant expression is observed in brain, kidney and eye.

The protein localises to the membrane. Its subcellular location is the cytoplasm. The protein resides in the cytoskeleton. It localises to the cilium basal body. In terms of biological role, component of the tectonic-like complex, a complex localized at the transition zone of primary cilia and acting as a barrier that prevents diffusion of transmembrane proteins between the cilia and plasma membranes. Required for hedgehog signaling transduction. The chain is Tectonic-2 (Tctn2) from Mus musculus (Mouse).